A 173-amino-acid chain; its full sequence is Large ribosomal subunit protein bL9 (173 aa).

The protein belongs to the bacterial ribosomal protein bL9 family.

Its function is as follows. Binds to the 23S rRNA. This chain is Large ribosomal subunit protein bL9, found in Rickettsia bellii (strain OSU 85-389).